A 147-amino-acid chain; its full sequence is UPF0306 protein YE0465 (147 aa).

It belongs to the UPF0306 family.

The protein is UPF0306 protein YE0465 of Yersinia enterocolitica serotype O:8 / biotype 1B (strain NCTC 13174 / 8081).